The following is a 214-amino-acid chain: Variable small protein 1 (214 aa).

The N-terminal stretch at 1-18 is a signal peptide; that stretch reads MRKRISAIIMTLFMVFMS. Cys-19 is lipidated: N-palmitoyl cysteine. Residue Cys-19 is the site of S-diacylglycerol cysteine attachment.

The protein belongs to the variable small protein (Vsp) family.

It localises to the cell outer membrane. In terms of biological role, the Vlp and Vsp proteins are antigenically distinct proteins, only one vlp or vsp gene is transcriptionally active at any one time. Switching between these genes is a mechanism of host immune response evasion. The polypeptide is Variable small protein 1 (Borrelia hermsii).